The following is a 424-amino-acid chain: MFYDQAKIYVKGGDGGAGAVAFRREKYVPEGGPSGGDGGRGGKVIFIADEGLRTLVDFRYKRHYKADRGEHGQGKNMHGKSGEDMSVRIPVGTVVKDADTGEILADLIEHGQKVVVANGGRGGRGNARFMSNTNKAPTVAENGEPGEERNLLLELKLLADVGLVGFPNVGKSTIISRISAAKPKIADYHFTTLVPNLGVVELEDGESFVVADIPGLIEGAHTGAGLGHEFLRHTERTRLILHVLDIAGSEERDPLEDFQIIAEELRQYSQELANRPILIVANKMDIPGAEENLQRLTEKLGEDYRIFPVSAATGEGLKELVYAAAKALPEIPAPQIFVRDEEQHKLTQASAPHRFELTREGDFFVVSGKEVEKHVQMTMFDREDGLYRFQNILKAMGIERALLDEGIKVGDKVRIAGIEFEWEE.

The region spanning 1 to 158 (MFYDQAKIYV…RNLLLELKLL (158 aa)) is the Obg domain. The OBG-type G domain maps to 159–329 (ADVGLVGFPN…LVYAAAKALP (171 aa)). Residues 165-172 (GFPNVGKS), 190-194 (FTTLV), 212-215 (DIPG), 282-285 (NKMD), and 310-312 (SAA) contribute to the GTP site. 2 residues coordinate Mg(2+): serine 172 and threonine 192. An OCT domain is found at 347 to 424 (TQASAPHRFE…IAGIEFEWEE (78 aa)).

This sequence belongs to the TRAFAC class OBG-HflX-like GTPase superfamily. OBG GTPase family. Monomer. Requires Mg(2+) as cofactor.

It is found in the cytoplasm. Its function is as follows. An essential GTPase which binds GTP, GDP and possibly (p)ppGpp with moderate affinity, with high nucleotide exchange rates and a fairly low GTP hydrolysis rate. Plays a role in control of the cell cycle, stress response, ribosome biogenesis and in those bacteria that undergo differentiation, in morphogenesis control. The sequence is that of GTPase Obg from Desulfitobacterium hafniense (strain DSM 10664 / DCB-2).